Consider the following 499-residue polypeptide: NAD(P)H-quinone oxidoreductase chain 4, chloroplastic (499 aa).

14 consecutive transmembrane segments (helical) span residues Phe-4 to Leu-24, Ile-31 to Phe-51, Ile-87 to Val-107, Leu-113 to Asp-133, Ile-134 to Met-154, Phe-167 to Phe-187, Ile-211 to His-231, His-242 to Ile-262, Ser-274 to Thr-294, Val-310 to Gly-330, Ala-331 to Ile-351, Ser-385 to Ile-405, Ile-416 to Met-436, and Ile-462 to Val-482.

The protein belongs to the complex I subunit 4 family.

It is found in the plastid. Its subcellular location is the chloroplast thylakoid membrane. The catalysed reaction is a plastoquinone + NADH + (n+1) H(+)(in) = a plastoquinol + NAD(+) + n H(+)(out). The enzyme catalyses a plastoquinone + NADPH + (n+1) H(+)(in) = a plastoquinol + NADP(+) + n H(+)(out). The polypeptide is NAD(P)H-quinone oxidoreductase chain 4, chloroplastic (ndhD) (Marchantia polymorpha (Common liverwort)).